A 434-amino-acid chain; its full sequence is Methylenetetrahydrofolate--tRNA-(uracil-5-)-methyltransferase TrmFO (434 aa).

Position 9–14 (9–14 (GAGLAG)) interacts with FAD.

It belongs to the MnmG family. TrmFO subfamily. The cofactor is FAD.

It localises to the cytoplasm. It carries out the reaction uridine(54) in tRNA + (6R)-5,10-methylene-5,6,7,8-tetrahydrofolate + NADH + H(+) = 5-methyluridine(54) in tRNA + (6S)-5,6,7,8-tetrahydrofolate + NAD(+). The enzyme catalyses uridine(54) in tRNA + (6R)-5,10-methylene-5,6,7,8-tetrahydrofolate + NADPH + H(+) = 5-methyluridine(54) in tRNA + (6S)-5,6,7,8-tetrahydrofolate + NADP(+). Functionally, catalyzes the folate-dependent formation of 5-methyl-uridine at position 54 (M-5-U54) in all tRNAs. This chain is Methylenetetrahydrofolate--tRNA-(uracil-5-)-methyltransferase TrmFO, found in Listeria monocytogenes serovar 1/2a (strain ATCC BAA-679 / EGD-e).